The following is a 287-amino-acid chain: Undecaprenyl-diphosphatase (287 aa).

Helical transmembrane passes span 50 to 70 (PGVSVTAAIQLGSIAAVIAYF), 97 to 117 (LGFAMVVGTLPILVIGLGIKF), 131 to 151 (IPSIAIVSIVMALLLALAEQV), 160 to 180 (VVLGRDGLLVGLAQALALLPG), 206 to 226 (FLLGIPGITIAGLVELKDALA), 234 to 254 (LPLLVGIGSAAVVSWLAIDWL), and 264 to 284 (WLFVAYRLVFGLLLLVWWGVY).

This sequence belongs to the UppP family.

It localises to the cell inner membrane. It carries out the reaction di-trans,octa-cis-undecaprenyl diphosphate + H2O = di-trans,octa-cis-undecaprenyl phosphate + phosphate + H(+). Catalyzes the dephosphorylation of undecaprenyl diphosphate (UPP). Confers resistance to bacitracin. This chain is Undecaprenyl-diphosphatase, found in Synechococcus sp. (strain CC9605).